The sequence spans 267 residues: tRNA pseudouridine synthase A (267 aa).

Asp54 (nucleophile) is an active-site residue. Tyr114 contacts substrate.

The protein belongs to the tRNA pseudouridine synthase TruA family. As to quaternary structure, homodimer.

It carries out the reaction uridine(38/39/40) in tRNA = pseudouridine(38/39/40) in tRNA. In terms of biological role, formation of pseudouridine at positions 38, 39 and 40 in the anticodon stem and loop of transfer RNAs. The sequence is that of tRNA pseudouridine synthase A from Tropheryma whipplei (strain Twist) (Whipple's bacillus).